We begin with the raw amino-acid sequence, 264 residues long: S-adenosylmethionine decarboxylase proenzyme (264 aa).

Ser112 serves as the catalytic Schiff-base intermediate with substrate; via pyruvic acid. Ser112 bears the Pyruvic acid (Ser); by autocatalysis mark. The Proton acceptor; for processing activity role is filled by His117. Cys140 serves as the catalytic Proton donor; for catalytic activity.

The protein belongs to the prokaryotic AdoMetDC family. Type 2 subfamily. As to quaternary structure, heterooctamer of four alpha and four beta chains arranged as a tetramer of alpha/beta heterodimers. Pyruvate is required as a cofactor. Post-translationally, is synthesized initially as an inactive proenzyme. Formation of the active enzyme involves a self-maturation process in which the active site pyruvoyl group is generated from an internal serine residue via an autocatalytic post-translational modification. Two non-identical subunits are generated from the proenzyme in this reaction, and the pyruvate is formed at the N-terminus of the alpha chain, which is derived from the carboxyl end of the proenzyme. The post-translation cleavage follows an unusual pathway, termed non-hydrolytic serinolysis, in which the side chain hydroxyl group of the serine supplies its oxygen atom to form the C-terminus of the beta chain, while the remainder of the serine residue undergoes an oxidative deamination to produce ammonia and the pyruvoyl group blocking the N-terminus of the alpha chain.

The catalysed reaction is S-adenosyl-L-methionine + H(+) = S-adenosyl 3-(methylsulfanyl)propylamine + CO2. It participates in amine and polyamine biosynthesis; S-adenosylmethioninamine biosynthesis; S-adenosylmethioninamine from S-adenosyl-L-methionine: step 1/1. Catalyzes the decarboxylation of S-adenosylmethionine to S-adenosylmethioninamine (dcAdoMet), the propylamine donor required for the synthesis of the polyamines spermine and spermidine from the diamine putrescine. The chain is S-adenosylmethionine decarboxylase proenzyme from Photorhabdus laumondii subsp. laumondii (strain DSM 15139 / CIP 105565 / TT01) (Photorhabdus luminescens subsp. laumondii).